The following is a 235-amino-acid chain: Orotidine 5'-phosphate decarboxylase (235 aa).

Substrate-binding positions include Asp-10, Lys-33, Asp-60–Thr-69, Thr-123, Arg-185, Gln-194, Gly-214, and Arg-215. The Proton donor role is filled by Lys-62.

The protein belongs to the OMP decarboxylase family. Type 1 subfamily. In terms of assembly, homodimer.

The catalysed reaction is orotidine 5'-phosphate + H(+) = UMP + CO2. It participates in pyrimidine metabolism; UMP biosynthesis via de novo pathway; UMP from orotate: step 2/2. Functionally, catalyzes the decarboxylation of orotidine 5'-monophosphate (OMP) to uridine 5'-monophosphate (UMP). The sequence is that of Orotidine 5'-phosphate decarboxylase from Lactobacillus johnsonii (strain CNCM I-12250 / La1 / NCC 533).